The chain runs to 336 residues: Aspartate--ammonia ligase (336 aa).

The protein belongs to the class-II aminoacyl-tRNA synthetase family. AsnA subfamily.

It localises to the cytoplasm. The catalysed reaction is L-aspartate + NH4(+) + ATP = L-asparagine + AMP + diphosphate + H(+). Its pathway is amino-acid biosynthesis; L-asparagine biosynthesis; L-asparagine from L-aspartate (ammonia route): step 1/1. The protein is Aspartate--ammonia ligase of Limosilactobacillus reuteri (strain DSM 20016) (Lactobacillus reuteri).